Reading from the N-terminus, the 306-residue chain is Manganese-binding lipoprotein MntA (306 aa).

Positions 1-18 are cleaved as a signal peptide; it reads MRQGLMAAVLFATFALTG. A lipid anchor (N-palmitoyl cysteine) is attached at Cys19. A lipid anchor (S-diacylglycerol cysteine) is attached at Cys19. Residues His66, His132, His198, and Asp278 each contribute to the Mn(2+) site.

It belongs to the bacterial solute-binding protein 9 family. The complex is probably composed of two ATP-binding proteins (MntB), two transmembrane proteins (MntC and MntD) and a solute-binding protein (MntA). Interacts with FloT.

It localises to the cell membrane. The protein resides in the membrane raft. Its function is as follows. Probably part of ATP-binding cassette (ABC) transport system MntABCD involved in manganese import. Binds manganese and delivers it to the membrane permease for translocation into the cytoplasm. This chain is Manganese-binding lipoprotein MntA, found in Bacillus subtilis (strain 168).